Reading from the N-terminus, the 212-residue chain is Leucyl/phenylalanyl-tRNA--protein transferase (212 aa).

It belongs to the L/F-transferase family.

Its subcellular location is the cytoplasm. It carries out the reaction N-terminal L-lysyl-[protein] + L-leucyl-tRNA(Leu) = N-terminal L-leucyl-L-lysyl-[protein] + tRNA(Leu) + H(+). The enzyme catalyses N-terminal L-arginyl-[protein] + L-leucyl-tRNA(Leu) = N-terminal L-leucyl-L-arginyl-[protein] + tRNA(Leu) + H(+). The catalysed reaction is L-phenylalanyl-tRNA(Phe) + an N-terminal L-alpha-aminoacyl-[protein] = an N-terminal L-phenylalanyl-L-alpha-aminoacyl-[protein] + tRNA(Phe). Its function is as follows. Functions in the N-end rule pathway of protein degradation where it conjugates Leu, Phe and, less efficiently, Met from aminoacyl-tRNAs to the N-termini of proteins containing an N-terminal arginine or lysine. The sequence is that of Leucyl/phenylalanyl-tRNA--protein transferase from Flavobacterium johnsoniae (strain ATCC 17061 / DSM 2064 / JCM 8514 / BCRC 14874 / CCUG 350202 / NBRC 14942 / NCIMB 11054 / UW101) (Cytophaga johnsonae).